A 396-amino-acid polypeptide reads, in one-letter code: DNA polymerase IV (396 aa).

The UmuC domain occupies 6–186 (IIHVDMDAFY…LPISRLWGVG (181 aa)). Residues Asp-10 and Asp-104 each coordinate Mg(2+). Glu-105 is a catalytic residue.

The protein belongs to the DNA polymerase type-Y family. As to quaternary structure, monomer. Requires Mg(2+) as cofactor.

It localises to the cytoplasm. The catalysed reaction is DNA(n) + a 2'-deoxyribonucleoside 5'-triphosphate = DNA(n+1) + diphosphate. Poorly processive, error-prone DNA polymerase involved in untargeted mutagenesis. Copies undamaged DNA at stalled replication forks, which arise in vivo from mismatched or misaligned primer ends. These misaligned primers can be extended by PolIV. Exhibits no 3'-5' exonuclease (proofreading) activity. May be involved in translesional synthesis, in conjunction with the beta clamp from PolIII. The polypeptide is DNA polymerase IV (Desulfatibacillum aliphaticivorans).